The primary structure comprises 71 residues: Small ribosomal subunit protein bS21 (71 aa).

It belongs to the bacterial ribosomal protein bS21 family.

The chain is Small ribosomal subunit protein bS21 from Thioalkalivibrio sulfidiphilus (strain HL-EbGR7).